A 93-amino-acid chain; its full sequence is Small ribosomal subunit protein uS19 (93 aa).

It belongs to the universal ribosomal protein uS19 family.

Protein S19 forms a complex with S13 that binds strongly to the 16S ribosomal RNA. This chain is Small ribosomal subunit protein uS19, found in Ehrlichia ruminantium (strain Welgevonden).